Consider the following 479-residue polypeptide: Beta-amyrin 28-monooxygenase (479 aa).

A helical membrane pass occupies residues 5–25 (FYLSLLLLFVTFISLSLFFIF). C426 serves as a coordination point for heme.

This sequence belongs to the cytochrome P450 family. Requires heme as cofactor. Expressed in roots, nodules and flowers.

The protein resides in the membrane. The enzyme catalyses beta-amyrin + 3 reduced [NADPH--hemoprotein reductase] + 3 O2 = oleanolate + 3 oxidized [NADPH--hemoprotein reductase] + 4 H2O + 4 H(+). Catalyzes the carboxylation of beta-amyrin at the C-28 position to form oleanolic acid. Involved in an early step in the hemolytic saponin biosynthetic pathway. Catalyzes the carboxylation of alpha-amyrin and lupeol at the C-28 position to form ursolic acid and betulinic acid respectively. The sequence is that of Beta-amyrin 28-monooxygenase from Medicago truncatula (Barrel medic).